Here is a 352-residue protein sequence, read N- to C-terminus: Chorismate synthase (352 aa).

Residues R48 and R54 each contribute to the NADP(+) site. FMN-binding positions include 125 to 127, 238 to 239, G278, 293 to 297, and R319; these read RSS, NA, and KPTSS.

The protein belongs to the chorismate synthase family. Homotetramer. FMNH2 serves as cofactor.

The enzyme catalyses 5-O-(1-carboxyvinyl)-3-phosphoshikimate = chorismate + phosphate. It functions in the pathway metabolic intermediate biosynthesis; chorismate biosynthesis; chorismate from D-erythrose 4-phosphate and phosphoenolpyruvate: step 7/7. Catalyzes the anti-1,4-elimination of the C-3 phosphate and the C-6 proR hydrogen from 5-enolpyruvylshikimate-3-phosphate (EPSP) to yield chorismate, which is the branch point compound that serves as the starting substrate for the three terminal pathways of aromatic amino acid biosynthesis. This reaction introduces a second double bond into the aromatic ring system. The polypeptide is Chorismate synthase (Bordetella avium (strain 197N)).